Consider the following 407-residue polypeptide: Imidazolonepropionase (407 aa).

2 residues coordinate Fe(3+): His74 and His76. Zn(2+)-binding residues include His74 and His76. Arg83, Tyr146, and His179 together coordinate 4-imidazolone-5-propanoate. Residue Tyr146 participates in N-formimidoyl-L-glutamate binding. Position 244 (His244) interacts with Fe(3+). His244 contacts Zn(2+). Gln247 is a 4-imidazolone-5-propanoate binding site. Asp319 provides a ligand contact to Fe(3+). Asp319 is a binding site for Zn(2+). N-formimidoyl-L-glutamate contacts are provided by Asn321 and Gly323. Thr324 contributes to the 4-imidazolone-5-propanoate binding site.

Belongs to the metallo-dependent hydrolases superfamily. HutI family. Zn(2+) is required as a cofactor. It depends on Fe(3+) as a cofactor.

The protein resides in the cytoplasm. It carries out the reaction 4-imidazolone-5-propanoate + H2O = N-formimidoyl-L-glutamate. Its pathway is amino-acid degradation; L-histidine degradation into L-glutamate; N-formimidoyl-L-glutamate from L-histidine: step 3/3. Its function is as follows. Catalyzes the hydrolytic cleavage of the carbon-nitrogen bond in imidazolone-5-propanoate to yield N-formimidoyl-L-glutamate. It is the third step in the universal histidine degradation pathway. In Salmonella agona (strain SL483), this protein is Imidazolonepropionase.